We begin with the raw amino-acid sequence, 118 residues long: Hydrogenase maturation factor HypA (118 aa).

H2 is a binding site for Ni(2+). Zn(2+) contacts are provided by C73, C76, C90, and C93.

The protein belongs to the HypA/HybF family.

In terms of biological role, involved in the maturation of [NiFe] hydrogenases. Required for nickel insertion into the metal center of the hydrogenase. The polypeptide is Hydrogenase maturation factor HypA (Salmonella typhi).